Consider the following 238-residue polypeptide: tRNA (guanine-N(1)-)-methyltransferase (238 aa).

Residues G110 and 129–134 each bind S-adenosyl-L-methionine; that span reads LGDFIL.

This sequence belongs to the RNA methyltransferase TrmD family. Homodimer.

Its subcellular location is the cytoplasm. The catalysed reaction is guanosine(37) in tRNA + S-adenosyl-L-methionine = N(1)-methylguanosine(37) in tRNA + S-adenosyl-L-homocysteine + H(+). Its function is as follows. Specifically methylates guanosine-37 in various tRNAs. This is tRNA (guanine-N(1)-)-methyltransferase from Clostridium botulinum (strain Alaska E43 / Type E3).